Here is a 696-residue protein sequence, read N- to C-terminus: Golgi integral membrane protein 4 (696 aa).

Gly-2 is lipidated: N-myristoyl glycine. At 2-12 the chain is on the cytoplasmic side; the sequence is GNGMCSRKQKR. Residues 13–33 traverse the membrane as a helical; Signal-anchor for type II membrane protein segment; sequence IFQTLLLLTVVFGFLYGAMLY. The Lumenal portion of the chain corresponds to 34 to 696; it reads YELQTQLRKA…AEKSHRRAEM (663 aa). Residues 35-244 adopt a coiled-coil conformation; the sequence is ELQTQLRKAE…KQLKDTLNRI (210 aa). Residues 38 to 107 form a golgi targeting region; that stretch reads TQLRKAEAVA…ETLNKGRQDS (70 aa). The tract at residues 80–175 is endosome targeting; that stretch reads LEHKKAKEDF…QELSKLKETV (96 aa). Disordered stretches follow at residues 122-145, 244-391, and 427-696; these read KSQH…QGED, IPSL…HARA, and LREH…RAEM. Residues 123-145 show a composition bias toward basic and acidic residues; sequence SQHEELKKQHSDLEEEHRKQGED. The golgi targeting stretch occupies residues 176-248; the sequence is YNLREENRQL…DTLNRIPSLR (73 aa). A compositionally biased stretch (polar residues) spans 254–269; it reads EQQNVTQVAHSPQGYN. A glycan (N-linked (GlcNAc...) asparagine) is linked at Asn-257. 5 stretches are compositionally biased toward basic and acidic residues: residues 271 to 281, 298 to 313, 324 to 343, 355 to 364, and 370 to 380; these read AREKPTREVQE, RAED…KEAE, EVER…RKAL, EHLEEEHDPS, and REWKEQHEQRE. Position 364 is a phosphoserine (Ser-364). The span at 436 to 453 shows a compositional bias: low complexity; sequence QQRLQGHLLRQQEQQQQQ. Composition is skewed to basic and acidic residues over residues 464-476 and 505-545; these read AELE…HQEQ and AYER…RAAV. A Phosphoserine modification is found at Ser-538. Residues 604–626 are compositionally biased toward acidic residues; the sequence is QQEDNVDEQYQEEAEEEVQEDLT. Tyr-613 is modified (phosphotyrosine). Thr-626 carries the post-translational modification Phosphothreonine. 2 stretches are compositionally biased toward basic and acidic residues: residues 627–638 and 661–672; these read EEKKRELEHNAE and RDDNRPKGREEH. Tyr-673 bears the Phosphotyrosine mark. Over residues 673-683 the composition is skewed to acidic residues; sequence YEEEEEEEEDG.

The protein belongs to the GOLIM4 family. In terms of processing, phosphorylated probably by c-AMP-dependent kinases in its lumenal part. Post-translationally, O-glycosylated; modified by sialic acid residues. N-glycosylated; N-glycans are probably of the complex type and modified by sialic acid residues.

It is found in the golgi apparatus. Its subcellular location is the golgi stack membrane. It localises to the endosome membrane. The protein localises to the membrane. Functionally, plays a role in endosome to Golgi protein trafficking; mediates protein transport along the late endosome-bypass pathway from the early endosome to the Golgi. The protein is Golgi integral membrane protein 4 (GOLIM4) of Homo sapiens (Human).